Reading from the N-terminus, the 283-residue chain is Thymidylate synthase (283 aa).

Position 22 (Arg-22) interacts with dUMP. Cys-160 serves as the catalytic Nucleophile. Residues 180–183 (RSCD), Asn-191, and 221–223 (HIY) each bind dUMP. Asp-183 lines the (6R)-5,10-methylene-5,6,7,8-tetrahydrofolate pocket. Ser-282 is a binding site for (6R)-5,10-methylene-5,6,7,8-tetrahydrofolate.

Belongs to the thymidylate synthase family. Bacterial-type ThyA subfamily. In terms of assembly, homodimer.

The protein resides in the cytoplasm. It catalyses the reaction dUMP + (6R)-5,10-methylene-5,6,7,8-tetrahydrofolate = 7,8-dihydrofolate + dTMP. It functions in the pathway pyrimidine metabolism; dTTP biosynthesis. Catalyzes the reductive methylation of 2'-deoxyuridine-5'-monophosphate (dUMP) to 2'-deoxythymidine-5'-monophosphate (dTMP) while utilizing 5,10-methylenetetrahydrofolate (mTHF) as the methyl donor and reductant in the reaction, yielding dihydrofolate (DHF) as a by-product. This enzymatic reaction provides an intracellular de novo source of dTMP, an essential precursor for DNA biosynthesis. This Pseudoalteromonas translucida (strain TAC 125) protein is Thymidylate synthase.